Reading from the N-terminus, the 123-residue chain is SGSCTTKTCWTTLPKFREIGYILKEKYNAAVQVEVVRASRLRQPTFLKIKQIRSYQKPMETDLVYIDKSPNYCEEDASTGSVGTQGRLCNRTSLSADGCDMMCCGRGYNTHQYTKVWQCNCKF.

A lipid anchor (O-palmitoleoyl serine; by PORCN) is attached at serine 1. Positions valine 33 to threonine 61 are disordered linker. Cysteines 89 and 104 form a disulfide. N-linked (GlcNAc...) asparagine glycosylation is present at asparagine 90.

It belongs to the Wnt family. Palmitoleoylation is required for efficient binding to frizzled receptors. Depalmitoleoylation leads to Wnt signaling pathway inhibition.

The protein localises to the secreted. It is found in the extracellular space. The protein resides in the extracellular matrix. Functionally, ligand for members of the frizzled family of seven transmembrane receptors that functions in the canonical Wnt/beta-catenin signaling pathway. Required for normal fusion of the chorion and the allantois during placenta development. Required for central nervous system (CNS) angiogenesis and blood-brain barrier regulation. This is Protein Wnt-7b (WNT-7B) from Sceloporus occidentalis (Western fence lizard).